Consider the following 530-residue polypeptide: Phosphoenolpyruvate carboxykinase (ATP) (530 aa).

3 residues coordinate substrate: arginine 58, tyrosine 195, and lysine 201. ATP-binding positions include lysine 201, histidine 220, and 236–244; that span reads GLSGTGKTT. The Mn(2+) site is built by lysine 201 and histidine 220. Aspartate 257 contacts Mn(2+). ATP is bound by residues glutamate 285, arginine 321, 440–441, and threonine 446; that span reads RI. Arginine 321 serves as a coordination point for substrate.

This sequence belongs to the phosphoenolpyruvate carboxykinase (ATP) family. It depends on Mn(2+) as a cofactor.

The protein resides in the cytoplasm. It carries out the reaction oxaloacetate + ATP = phosphoenolpyruvate + ADP + CO2. It participates in carbohydrate biosynthesis; gluconeogenesis. In terms of biological role, involved in the gluconeogenesis. Catalyzes the conversion of oxaloacetate (OAA) to phosphoenolpyruvate (PEP) through direct phosphoryl transfer between the nucleoside triphosphate and OAA. The polypeptide is Phosphoenolpyruvate carboxykinase (ATP) (Staphylococcus aureus (strain Mu3 / ATCC 700698)).